We begin with the raw amino-acid sequence, 361 residues long: Phospho-N-acetylmuramoyl-pentapeptide-transferase (361 aa).

10 helical membrane-spanning segments follow: residues 25–45, 72–92, 95–115, 135–155, 169–189, 200–220, 240–260, 264–284, 289–309, and 338–358; these read TGGA…WIID, TPTM…VLWA, LNPY…VGFY, LLIE…LGRG, VVLN…VGAG, GLAI…SYLV, LAVL…FNAP, IFMG…IAVA, IVLA…IVQV, and QIVI…LSTL.

It belongs to the glycosyltransferase 4 family. MraY subfamily. Requires Mg(2+) as cofactor.

Its subcellular location is the cell inner membrane. The enzyme catalyses UDP-N-acetyl-alpha-D-muramoyl-L-alanyl-gamma-D-glutamyl-meso-2,6-diaminopimeloyl-D-alanyl-D-alanine + di-trans,octa-cis-undecaprenyl phosphate = di-trans,octa-cis-undecaprenyl diphospho-N-acetyl-alpha-D-muramoyl-L-alanyl-D-glutamyl-meso-2,6-diaminopimeloyl-D-alanyl-D-alanine + UMP. The protein operates within cell wall biogenesis; peptidoglycan biosynthesis. Its function is as follows. Catalyzes the initial step of the lipid cycle reactions in the biosynthesis of the cell wall peptidoglycan: transfers peptidoglycan precursor phospho-MurNAc-pentapeptide from UDP-MurNAc-pentapeptide onto the lipid carrier undecaprenyl phosphate, yielding undecaprenyl-pyrophosphoryl-MurNAc-pentapeptide, known as lipid I. The polypeptide is Phospho-N-acetylmuramoyl-pentapeptide-transferase (Rhodopseudomonas palustris (strain HaA2)).